Reading from the N-terminus, the 611-residue chain is MSCKKQRSRKHSVNEKCNMKIEHYFSPVSKEQQNNCSTSLMRMESRGDPRATTNTQAQRFHSPKKNPEDQTMPQNRTIYVTLKVNHRRNQDMKLKLTHSENSSLYMALNTLQAVRKEIETHQGQEMLVRGTEGIKEYINLGMPLSCFPEGGQVVITFSQSKSKQKEDNHIFGRQDKASTECVKFYIHAIGIGKCKRRIVKCGKLHKKGRKLCVYAFKGETIKDALCKDGRFLSFLENDDWKLIENNDTILESTQPVDELEGRYFQVEVEKRMVPSAAASQNPESEKRNTCVLREQIVAQYPSLKRESEKIIENFKKKMKVKNGETLFELHRTTFGKVTKNSSSIKVVKLLVRLSDSVGYLFWDSATTGYATCFVFKGLFILTCRHVIDSIVGDGIEPSKWATIIGQCVRVTFGYEELKDKETNYFFVEPWFEIHNEELDYAVLKLKENGQQVPMELYNGITPVPLSGLIHIIGHPYGEKKQIDACAVIPQGQRAKKCQERVQSKKAESPEYVHMYTQRSFQKIVHNPDVITYDTEFFFGASGSPVFDSKGSLVAMHAAGFAYTYQNETRSIIEFGSTMESILLDIKQRHKPWYEEVFVNQQDVEMMSDEDL.

The PIP-box signature appears at 16-28 (KCNMKIEHYFSPV). Residue lysine 20 forms a Glycyl lysine isopeptide (Lys-Gly) (interchain with G-Cter in SUMO2) linkage. At serine 26 the chain carries Phosphoserine. Residues lysine 30 and lysine 65 each participate in a glycyl lysine isopeptide (Lys-Gly) (interchain with G-Cter in SUMO2) cross-link. A disordered region spans residues 44–73 (ESRGDPRATTNTQAQRFHSPKKNPEDQTMP). Positions 336–611 (KVTKNSSSIK…DVEMMSDEDL (276 aa)) are interaction with SV40 large T antigen. Active-site charge relay system residues include histidine 385, aspartate 439, and serine 541.

It belongs to the FAM111 family. In terms of assembly, interacts (via PIP-box) with PCNA; then interaction is direct. As to quaternary structure, (Microbial infection) Interacts with SV40 virus large T antigen and this interaction is required for efficient viral replication and sustained viral gene expression in restrictive cell types. (Microbial infection) Interacts with vaccinia virus protein OPG079; this interaction promotes the degradation of OPG079. Autocatalytically cleaved; activating the protein. Autocatalytic cleavage takes place in trans.

It is found in the nucleus. Its subcellular location is the chromosome. The protein resides in the cytoplasm. Single-stranded DNA-binding serine protease that mediates the proteolytic cleavage of covalent DNA-protein cross-links (DPCs) during DNA synthesis, thereby playing a key role in maintaining genomic integrity. DPCs are highly toxic DNA lesions that interfere with essential chromatin transactions, such as replication and transcription, and which are induced by reactive agents, such as UV light or formaldehyde. Protects replication fork from stalling by removing DPCs, such as covalently trapped topoisomerase 1 (TOP1) adducts on DNA lesion, or poly(ADP-ribose) polymerase 1 (PARP1)-DNA complexes trapped by PARP inhibitors. Required for PCNA loading on replication sites. Promotes S-phase entry and DNA synthesis. Also acts as a restriction factor for some viruses including SV40 polyomavirus and vaccinia virus. Mechanistically, affects nuclear barrier function during viral replication by mediating the disruption of the nuclear pore complex (NPC) via its protease activity. In turn, interacts with vaccinia virus DNA-binding protein OPG079 in the cytoplasm and promotes its degradation without the need of its protease activity but through autophagy. This is Serine protease FAM111A from Homo sapiens (Human).